Consider the following 332-residue polypeptide: Ferredoxin--NADP reductase 2 (332 aa).

Glu37, Gln45, Tyr50, Val90, Phe124, Asp285, and Thr326 together coordinate FAD.

It belongs to the ferredoxin--NADP reductase type 2 family. In terms of assembly, homodimer. FAD serves as cofactor.

It catalyses the reaction 2 reduced [2Fe-2S]-[ferredoxin] + NADP(+) + H(+) = 2 oxidized [2Fe-2S]-[ferredoxin] + NADPH. The polypeptide is Ferredoxin--NADP reductase 2 (Bacillus licheniformis (strain ATCC 14580 / DSM 13 / JCM 2505 / CCUG 7422 / NBRC 12200 / NCIMB 9375 / NCTC 10341 / NRRL NRS-1264 / Gibson 46)).